Reading from the N-terminus, the 242-residue chain is Ribonuclease PH (242 aa).

Phosphate-binding positions include R86 and 124 to 126 (GTR).

It belongs to the RNase PH family. In terms of assembly, homohexameric ring arranged as a trimer of dimers.

It carries out the reaction tRNA(n+1) + phosphate = tRNA(n) + a ribonucleoside 5'-diphosphate. Functionally, phosphorolytic 3'-5' exoribonuclease that plays an important role in tRNA 3'-end maturation. Removes nucleotide residues following the 3'-CCA terminus of tRNAs; can also add nucleotides to the ends of RNA molecules by using nucleoside diphosphates as substrates, but this may not be physiologically important. Probably plays a role in initiation of 16S rRNA degradation (leading to ribosome degradation) during starvation. The polypeptide is Ribonuclease PH (Caulobacter sp. (strain K31)).